Consider the following 318-residue polypeptide: Ubiquitin-like domain-containing CTD phosphatase 1 (318 aa).

A Ubiquitin-like domain is found at 3–81; that stretch reads VSVIIKWGGQ…IMMMGTREES (79 aa). An FCP1 homology domain is found at 133–294; the sequence is PRPGKRLLVL…YKLSQYLKEI (162 aa). Residues Asp143, Asp145, and Asp253 each contribute to the Mg(2+) site.

It depends on Mg(2+) as a cofactor.

It is found in the nucleus. It carries out the reaction O-phospho-L-seryl-[protein] + H2O = L-seryl-[protein] + phosphate. It catalyses the reaction O-phospho-L-threonyl-[protein] + H2O = L-threonyl-[protein] + phosphate. Its function is as follows. Dephosphorylates 26S nuclear proteasomes, thereby decreasing their proteolytic activity. Recruited to the 19S regulatory particle of the 26S proteasome where it dephosphorylates 19S component psmc2 which impairs psmc2 ATPase activity and disrupts 26S proteasome assembly. Has also been reported to stimulate the proteolytic activity of the 26S proteasome. This chain is Ubiquitin-like domain-containing CTD phosphatase 1 (ublcp1), found in Danio rerio (Zebrafish).